Reading from the N-terminus, the 142-residue chain is Gonadotropin subunit beta-2 (142 aa).

The first 23 residues, M1–G23, serve as a signal peptide directing secretion. Disulfide bonds link C29/C77, C43/C92, C46/C130, C54/C108, C58/C110, and C113/C120. N33 carries N-linked (GlcNAc...) asparagine glycosylation.

The protein belongs to the glycoprotein hormones subunit beta family. In terms of assembly, heterodimer of an alpha and a beta chain.

It is found in the secreted. Functionally, involved in gametogenesis and steroidogenesis. This Oncorhynchus tshawytscha (Chinook salmon) protein is Gonadotropin subunit beta-2 (cgbb).